Here is a 397-residue protein sequence, read N- to C-terminus: Serine protease MT3772 (397 aa).

Helical transmembrane passes span 9–29, 32–52, 62–82, and 102–122; these read IAVLAVAFIAAISGWRAGALG, LSFGGVLLGATAGVLLAPHIV, LFAALFLILALVVVGEVAGVV, and VIGVGVQLVVVLTAAWLLAMP. Cysteine 214 and cysteine 395 are disulfide-bonded. Histidine 235 acts as the Proton acceptor in catalysis. Aspartate 264 is an active-site residue. Serine 343 serves as the catalytic Charge relay system.

This sequence belongs to the peptidase S1C family. In terms of assembly, monomer.

It localises to the membrane. Required for M.tuberculosis resistance to oxidative stress in addition to its role in resistance to acid, which is essential for virulence. The polypeptide is Serine protease MT3772 (Mycobacterium tuberculosis (strain CDC 1551 / Oshkosh)).